The sequence spans 334 residues: Transposase for insertion sequence element IS1328 (334 aa).

The protein belongs to the transposase IS1111A/IS1328/IS1533 family.

In terms of biological role, required for the transposition of the insertion element. The polypeptide is Transposase for insertion sequence element IS1328 (Yersinia enterocolitica).